We begin with the raw amino-acid sequence, 421 residues long: uncharacterized protein (421 aa).

In terms of domain architecture, TRAM spans 14–72 (DLTKGDTITVEVTRPAHGGEGIAHHGGRVIFVRGGFPGDDVDVEITQVKKRFARGFVVQ). Gln250, Tyr286, Glu308, and Asp349 together coordinate S-adenosyl-L-methionine. The active-site Nucleophile is Cys376.

Belongs to the class I-like SAM-binding methyltransferase superfamily. RNA M5U methyltransferase family.

This is an uncharacterized protein from Corynebacterium efficiens (strain DSM 44549 / YS-314 / AJ 12310 / JCM 11189 / NBRC 100395).